The sequence spans 98 residues: MTLTYMNIMLAFAISLLGMLTYRSHLVASLLCLEGMMMSLFIMATLIASNTHFPLINIMPIILLVFAACETAVGLALLISISNTYGLDYVHNLNLLQC.

A run of 3 helical transmembrane segments spans residues 1-21 (MTLTYMNIMLAFAISLLGMLT), 27-47 (VASLLCLEGMMMSLFIMATLI), and 61-81 (IILLVFAACETAVGLALLISI).

It belongs to the complex I subunit 4L family. In terms of assembly, core subunit of respiratory chain NADH dehydrogenase (Complex I) which is composed of 45 different subunits.

It localises to the mitochondrion inner membrane. The enzyme catalyses a ubiquinone + NADH + 5 H(+)(in) = a ubiquinol + NAD(+) + 4 H(+)(out). Functionally, core subunit of the mitochondrial membrane respiratory chain NADH dehydrogenase (Complex I) which catalyzes electron transfer from NADH through the respiratory chain, using ubiquinone as an electron acceptor. Part of the enzyme membrane arm which is embedded in the lipid bilayer and involved in proton translocation. This is NADH-ubiquinone oxidoreductase chain 4L (MT-ND4L) from Macaca mulatta (Rhesus macaque).